Reading from the N-terminus, the 282-residue chain is NADPH-dependent 7-cyano-7-deazaguanine reductase (282 aa).

88–90 (IES) serves as a coordination point for substrate. Position 90–91 (90–91 (SK)) interacts with NADPH. Cys-190 functions as the Thioimide intermediate in the catalytic mechanism. Residue Asp-197 is the Proton donor of the active site. 229 to 230 (HE) contributes to the substrate binding site. NADPH is bound at residue 258–259 (RG).

The protein belongs to the GTP cyclohydrolase I family. QueF type 2 subfamily. Homodimer.

It is found in the cytoplasm. The catalysed reaction is 7-aminomethyl-7-carbaguanine + 2 NADP(+) = 7-cyano-7-deazaguanine + 2 NADPH + 3 H(+). Its pathway is tRNA modification; tRNA-queuosine biosynthesis. Catalyzes the NADPH-dependent reduction of 7-cyano-7-deazaguanine (preQ0) to 7-aminomethyl-7-deazaguanine (preQ1). This chain is NADPH-dependent 7-cyano-7-deazaguanine reductase, found in Escherichia coli (strain K12 / MC4100 / BW2952).